The chain runs to 224 residues: tRNA (guanine-N(7)-)-methyltransferase (224 aa).

S-adenosyl-L-methionine contacts are provided by Glu-56, Glu-81, Asp-108, and Asp-131. The active site involves Asp-131. Substrate-binding positions include Lys-135, Asp-167, and 202-205 (TKFE).

The protein belongs to the class I-like SAM-binding methyltransferase superfamily. TrmB family.

The enzyme catalyses guanosine(46) in tRNA + S-adenosyl-L-methionine = N(7)-methylguanosine(46) in tRNA + S-adenosyl-L-homocysteine. It functions in the pathway tRNA modification; N(7)-methylguanine-tRNA biosynthesis. In terms of biological role, catalyzes the formation of N(7)-methylguanine at position 46 (m7G46) in tRNA. This Nitrosomonas europaea (strain ATCC 19718 / CIP 103999 / KCTC 2705 / NBRC 14298) protein is tRNA (guanine-N(7)-)-methyltransferase.